The chain runs to 235 residues: Secretory carrier-associated membrane protein 5B (235 aa).

The Cytoplasmic portion of the chain corresponds to 1-39 (MSDKPNNFPPLPRFIPLKPCFYQDFDTDIPDVHRTTAKR). Residues 40–60 (LYYLWMLNSITLGVNLIGCLA) form a helical membrane-spanning segment. At 61-67 (WLIGGGG) the chain is on the extracellular side. A helical transmembrane segment spans residues 68 to 88 (ATNFGLAFLWLILFTPCSYVC). The Cytoplasmic portion of the chain corresponds to 89–102 (WFRPIYKAFKTDSS). The chain crosses the membrane as a helical span at residues 103–125 (FNFMAFFFTFTGQLVISIIQAVG). Residues 126-148 (IPGWGVCGWIASISFFGTNVGSA) are Extracellular-facing. The chain crosses the membrane as a helical span at residues 149–169 (VVMLIPTIMFTAVAVLSFVAL). The Cytoplasmic portion of the chain corresponds to 170-235 (TKVHRFYRGA…TPNYGYSNQM (66 aa)).

The protein belongs to the SCAMP family. SCAMP5 subfamily.

It localises to the cell membrane. Its subcellular location is the golgi apparatus membrane. The protein resides in the golgi apparatus. The protein localises to the trans-Golgi network membrane. It is found in the recycling endosome membrane. It localises to the cytoplasmic vesicle. Its subcellular location is the secretory vesicle. The protein resides in the synaptic vesicle membrane. Required for the calcium-dependent exocytosis of signal sequence-containing cytokines. Probably acts in cooperation with the SNARE machinery. The polypeptide is Secretory carrier-associated membrane protein 5B (scamp5-b) (Xenopus laevis (African clawed frog)).